Consider the following 171-residue polypeptide: Translationally-controlled tumor protein homolog (171 aa).

One can recognise a TCTP domain in the interval Met1–Cys171.

This sequence belongs to the TCTP family.

The protein resides in the cytoplasm. Involved in calcium binding and microtubule stabilization. This Labeo rohita (Indian major carp) protein is Translationally-controlled tumor protein homolog (tpt1).